The sequence spans 365 residues: GTPase Obg (365 aa).

One can recognise an Obg domain in the interval 1-159; the sequence is MKFIDEARIE…RMLKLELKVL (159 aa). The OBG-type G domain occupies 160–334; that stretch reads ADVGLLGMPN…LVYAIKDHLA (175 aa). GTP-binding positions include 166-173, 191-195, 213-216, 284-287, and 315-317; these read GMPNAGKS, FTTLH, DIPG, NKLD, and SAL. 2 residues coordinate Mg(2+): S173 and T193.

Belongs to the TRAFAC class OBG-HflX-like GTPase superfamily. OBG GTPase family. Monomer. Mg(2+) is required as a cofactor.

It localises to the cytoplasm. In terms of biological role, an essential GTPase which binds GTP, GDP and possibly (p)ppGpp with moderate affinity, with high nucleotide exchange rates and a fairly low GTP hydrolysis rate. Plays a role in control of the cell cycle, stress response, ribosome biogenesis and in those bacteria that undergo differentiation, in morphogenesis control. The protein is GTPase Obg of Cupriavidus metallidurans (strain ATCC 43123 / DSM 2839 / NBRC 102507 / CH34) (Ralstonia metallidurans).